Consider the following 257-residue polypeptide: Discoidin-2 (257 aa).

The segment at M1–P155 is beta-sandwich. Residues C10–L154 enclose the F5/8 type C domain. The Ca(2+) site is built by N39, S40, and D47. The Cell attachment site motif lies at R81–D83. H84 carries the post-translational modification Phosphohistidine. Residues V156 to P162 form a linker region. Residues S163–N257 are lectin-like. A carbohydrate-binding residues include D209, R218, and W238.

Homotrimer. Post-translationally, the N-terminus is blocked. As to expression, maturing spore cells.

Galactose-binding lectin. May be necessary for the primary process of spore formation and may be involved in spore coat formation. The polypeptide is Discoidin-2 (dscE) (Dictyostelium discoideum (Social amoeba)).